Here is a 221-residue protein sequence, read N- to C-terminus: Iron-sulfur cluster repair protein YtfE (221 aa).

Belongs to the RIC family. YtfE subfamily. Homodimer.

The protein localises to the cytoplasm. Its function is as follows. Di-iron-containing protein involved in the repair of iron-sulfur clusters damaged by oxidative and nitrosative stress conditions. This chain is Iron-sulfur cluster repair protein YtfE, found in Yersinia pestis bv. Antiqua (strain Antiqua).